The chain runs to 136 residues: Probable S-adenosyl-L-methionine-binding protein PH1056 (136 aa).

The TsaA-like domain maps to 8–126; sequence IVPVGYIRKE…FPERYDCPKE (119 aa). Residues 48–49, arginine 78, and 106–109 contribute to the S-adenosyl-L-methionine site; these read HK and EDGT.

It belongs to the tRNA methyltransferase O family.

The polypeptide is Probable S-adenosyl-L-methionine-binding protein PH1056 (Pyrococcus horikoshii (strain ATCC 700860 / DSM 12428 / JCM 9974 / NBRC 100139 / OT-3)).